Reading from the N-terminus, the 244-residue chain is Transcriptional activator protein PhzR (244 aa).

Residues Ala177 to Gly242 enclose the HTH luxR-type domain. Residues Ser201–Arg220 constitute a DNA-binding region (H-T-H motif).

Belongs to the autoinducer-regulated transcriptional regulatory protein family.

Positive regulator of phenazine antibiotic production. May activate the phenazine biosynthetic genes by binding to a DNA sequence upstream of them, or to an intermediate gene which, in turn, interacts with them. The polypeptide is Transcriptional activator protein PhzR (phzR) (Pseudomonas fluorescens).